A 302-amino-acid chain; its full sequence is Short-chain dehydrogenase/reductase 3 (302 aa).

Transmembrane regions (helical) follow at residues 9-29, 170-190, 195-215, and 253-273; these read LVVF…GLVL, IVCL…DYCT, AFAF…VSAT, and AVQL…LIIL. Serine 175 contacts substrate. The active-site Proton acceptor is the tyrosine 188.

Belongs to the short-chain dehydrogenases/reductases (SDR) family. As to expression, in the retina, expressed in cone but not rod outer segments.

It is found in the membrane. It carries out the reaction all-trans-retinol + NADP(+) = all-trans-retinal + NADPH + H(+). Functionally, catalyzes the reduction of all-trans-retinal to all-trans-retinol in the presence of NADPH. This chain is Short-chain dehydrogenase/reductase 3 (DHRS3), found in Bos taurus (Bovine).